The following is a 394-amino-acid chain: Ketoisovalerate oxidoreductase subunit VorA (394 aa).

Heterotetramer of one alpha, one beta, one delta and one gamma chain.

It carries out the reaction 3-methyl-2-oxobutanoate + 2 oxidized [2Fe-2S]-[ferredoxin] + CoA = 2-methylpropanoyl-CoA + 2 reduced [2Fe-2S]-[ferredoxin] + CO2 + H(+). The sequence is that of Ketoisovalerate oxidoreductase subunit VorA (vorA) from Pyrococcus furiosus (strain ATCC 43587 / DSM 3638 / JCM 8422 / Vc1).